Here is a 395-residue protein sequence, read N- to C-terminus: Flavohemoprotein (395 aa).

Residues 1-136 enclose the Globin domain; that stretch reads MLDQQTIATI…LANVFIQRES (136 aa). His-85 contacts heme b. Active-site charge relay system residues include Tyr-95 and Glu-135. Residues 147–395 form a reductase region; that stretch reads GGWHGIRPFR…YECFGPHKVI (249 aa). The 106-residue stretch at 150-255 folds into the FAD-binding FR-type domain; that stretch reads HGIRPFRIVA…AAPHGDFYLE (106 aa). Residues Tyr-188 and 204-207 each bind FAD; that span reads RQYS. 268–273 contributes to the NADP(+) binding site; that stretch reads GVGQTP. An FAD-binding site is contributed by 388 to 391; it reads CFGP.

Belongs to the globin family. Two-domain flavohemoproteins subfamily. The protein in the C-terminal section; belongs to the flavoprotein pyridine nucleotide cytochrome reductase family. The cofactor is heme b. FAD is required as a cofactor.

The protein resides in the cytoplasm. It catalyses the reaction 2 nitric oxide + NADPH + 2 O2 = 2 nitrate + NADP(+) + H(+). The catalysed reaction is 2 nitric oxide + NADH + 2 O2 = 2 nitrate + NAD(+) + H(+). Functionally, is involved in NO detoxification in an aerobic process, termed nitric oxide dioxygenase (NOD) reaction that utilizes O(2) and NAD(P)H to convert NO to nitrate, which protects the bacterium from various noxious nitrogen compounds. Therefore, plays a central role in the inducible response to nitrosative stress. The polypeptide is Flavohemoprotein (hmp) (Dickeya dadantii (strain 3937) (Erwinia chrysanthemi (strain 3937))).